Here is a 1026-residue protein sequence, read N- to C-terminus: mRNA transport homolog 4 (1026 aa).

The 157-residue stretch at Ile134–Val290 folds into the Helicase ATP-binding domain. Position 147–154 (Ala147–Thr154) interacts with ATP. Positions Asp238–His241 match the DEIH box motif. Residues Asn360–Glu564 form the Helicase C-terminal domain.

This sequence belongs to the helicase family. SKI2 subfamily.

The protein localises to the nucleus. The sequence is that of mRNA transport homolog 4 (mtr-4) from Caenorhabditis elegans.